Consider the following 123-residue polypeptide: Large ribosomal subunit protein uL29y (123 aa).

The protein belongs to the universal ribosomal protein uL29 family.

In Arabidopsis thaliana (Mouse-ear cress), this protein is Large ribosomal subunit protein uL29y (RPL35B).